Here is a 74-residue protein sequence, read N- to C-terminus: Exodeoxyribonuclease 7 small subunit (74 aa).

It belongs to the XseB family. Heterooligomer composed of large and small subunits.

The protein resides in the cytoplasm. It carries out the reaction Exonucleolytic cleavage in either 5'- to 3'- or 3'- to 5'-direction to yield nucleoside 5'-phosphates.. Bidirectionally degrades single-stranded DNA into large acid-insoluble oligonucleotides, which are then degraded further into small acid-soluble oligonucleotides. In Leuconostoc citreum (strain KM20), this protein is Exodeoxyribonuclease 7 small subunit.